The primary structure comprises 286 residues: MKLSVYGKGGIGKSTTSCNISVALARRGKKVLQIGCDPKHDSTFTLTGFLIPTIIDTLQAKDYHYEDVWPEDVIYRGYGGVDCVEAGGPPAGAGCGGYVVGETVKLLKELNAFDEYDVILFDVLGDVVCGGFAAPLNYSDYCLIITDNGFDALFAANRIAASVREKARTHTLRLAGLIGNRTSKRDLIDKYIEAVPMPVLEVLPLIEDIRISRVKGKTVFEMAETEPSLLTVCDYYLNIADQILARPEGVVPKDAADRDLFSLLSDFYLNPPKQTTEAIAPEALLV.

Residues glycine 10–threonine 15 and lysine 39 each bind ATP. Serine 14 contributes to the Mg(2+) binding site. 2 residues coordinate [4Fe-4S] cluster: cysteine 95 and cysteine 129. Residue asparagine 180 to arginine 181 participates in ATP binding.

It belongs to the NifH/BchL/ChlL family. Homodimer. Protochlorophyllide reductase is composed of three subunits; ChlL, ChlN and ChlB. [4Fe-4S] cluster is required as a cofactor.

It carries out the reaction chlorophyllide a + oxidized 2[4Fe-4S]-[ferredoxin] + 2 ADP + 2 phosphate = protochlorophyllide a + reduced 2[4Fe-4S]-[ferredoxin] + 2 ATP + 2 H2O. The protein operates within porphyrin-containing compound metabolism; chlorophyll biosynthesis (light-independent). Functionally, component of the dark-operative protochlorophyllide reductase (DPOR) that uses Mg-ATP and reduced ferredoxin to reduce ring D of protochlorophyllide (Pchlide) to form chlorophyllide a (Chlide). This reaction is light-independent. The L component serves as a unique electron donor to the NB-component of the complex, and binds Mg-ATP. This chain is Light-independent protochlorophyllide reductase iron-sulfur ATP-binding protein, found in Synechococcus elongatus (strain ATCC 33912 / PCC 7942 / FACHB-805) (Anacystis nidulans R2).